A 1069-amino-acid chain; its full sequence is Acyl-CoA dehydrogenase family member 10 (1069 aa).

An N6-succinyllysine modification is found at K413. At K427 the chain carries N6-acetyllysine; alternate. At K427 the chain carries N6-succinyllysine; alternate. FAD-binding positions include F792–S802, S828, R943, Q1013, and E1044. N6-acetyllysine; alternate is present on K1052. Residue K1052 is modified to N6-succinyllysine; alternate.

It belongs to the acyl-CoA dehydrogenase family. It depends on FAD as a cofactor.

The catalysed reaction is a 2,3-saturated acyl-CoA + A = a 2,3-dehydroacyl-CoA + AH2. Its function is as follows. Acyl-CoA dehydrogenase only active with R- and S-2-methyl-C15-CoA. This chain is Acyl-CoA dehydrogenase family member 10 (Acad10), found in Mus musculus (Mouse).